The following is a 361-amino-acid chain: Polyribonucleotide 5'-hydroxyl-kinase MJ1315 (361 aa).

39 to 46 provides a ligand contact to ATP; sequence GGVDSGKT.

The cofactor is a divalent metal cation.

It carries out the reaction a 5'-end dephospho-2'-deoxyribonucleoside-DNA + ATP = a 5'-end 5'-phospho-2'-deoxyribonucleoside-DNA + ADP + H(+). The enzyme catalyses a 5'-end dephospho-ribonucleoside-RNA + ATP = a 5'-end 5'-phospho-ribonucleoside-RNA + ADP + H(+). In terms of biological role, polynucleotide kinase that can phosphorylate the 5'-hydroxyl groups of both single-stranded RNA (ssRNA) and single-stranded DNA (ssDNA). Exhibits a strong preference for ssRNA. This chain is Polyribonucleotide 5'-hydroxyl-kinase MJ1315, found in Methanocaldococcus jannaschii (strain ATCC 43067 / DSM 2661 / JAL-1 / JCM 10045 / NBRC 100440) (Methanococcus jannaschii).